The primary structure comprises 93 residues: Acylphosphatase (93 aa).

An intrachain disulfide couples Cys-5 to Cys-49. The Acylphosphatase-like domain maps to 5–93 (CIIAWVYGRV…ETLTGFSIRY (89 aa)). Asn-38 is an active-site residue.

Belongs to the acylphosphatase family.

It carries out the reaction an acyl phosphate + H2O = a carboxylate + phosphate + H(+). This Salmonella paratyphi A (strain ATCC 9150 / SARB42) protein is Acylphosphatase.